The following is a 598-amino-acid chain: Probable translation initiation factor IF-2 (598 aa).

The tr-type G domain occupies 3–225; it reads LRCPIVSVLG…GLAQKFLEQK (223 aa). The tract at residues 12–19 is G1; it reads GHVDHGKT. Residue 12-19 coordinates GTP; it reads GHVDHGKT. The interval 37 to 41 is G2; the sequence is GITQH. Residues 76–79 are G3; that stretch reads DTPG. Residues 76-80 and 130-133 contribute to the GTP site; these read DTPGH and NKVD. The interval 130-133 is G4; that stretch reads NKVD. A G5 region spans residues 200–202; sequence SAM.

The protein belongs to the TRAFAC class translation factor GTPase superfamily. Classic translation factor GTPase family. IF-2 subfamily.

Function in general translation initiation by promoting the binding of the formylmethionine-tRNA to ribosomes. Seems to function along with eIF-2. In Methanococcus maripaludis (strain C7 / ATCC BAA-1331), this protein is Probable translation initiation factor IF-2.